Reading from the N-terminus, the 317-residue chain is Dehydrogenase/reductase SDR family member 12 (317 aa).

Positions 50 and 52 each coordinate NAD(+). A substrate-binding site is contributed by S175. Positions 201, 205, and 234 each coordinate NAD(+). Y201 functions as the Proton acceptor in the catalytic mechanism.

Belongs to the short-chain dehydrogenases/reductases (SDR) family.

Functionally, putative oxidoreductase. The polypeptide is Dehydrogenase/reductase SDR family member 12 (DHRS12) (Bos taurus (Bovine)).